The following is a 1325-amino-acid chain: ATP-binding cassette sub-family C member 4 (1325 aa).

Transmembrane regions (helical) follow at residues 93–113 (LILGIFTLIEEGTRVVQPLFL), 136–156 (GYAAVLSMCTLILAILHHLYF), 205–225 (FDQVTIFLHFLWAGPLQAIAV), 227–247 (VLLWVEIGISCLAGLAVLVIL), 322–342 (ASFFIANKVILFVTFTSYVLL), and 351–371 (VFVAMTLYGAVRLTVTLFFPS). In terms of domain architecture, ABC transmembrane type-1 1 spans 93-377 (LILGIFTLIE…FFPSAIERGS (285 aa)). The ABC transporter 1 domain occupies 410–633 (VHVQDFTAFW…GVDFGSLLKK (224 aa)). Residue 445–452 (GPVGAGKS) participates in ATP binding. Phosphothreonine is present on residues T646 and T648. Residues 657 to 667 (ASIWSQQSSRP) show a composition bias toward polar residues. Positions 657 to 690 (ASIWSQQSSRPSLKDGAPEGQDAENTQAVQPEES) are disordered. Phosphoserine is present on residues S664 and S668. Transmembrane regions (helical) follow at residues 710–730 (SWFFIIFLVLLNMVGQVFYVL), 761–781 (LSWYLGIYAGLTAVTVLFGIA), 849–869 (LVVSVIAVAAAVIPWILIPLV), 954–974 (AICAIFVIVVAFGSLVLAKTL), and 977–997 (GQVGLALSYALTLMGMFQWSV). The ABC transmembrane type-1 2 domain maps to 714–1005 (IIFLVLLNMV…SVRQSAEVEN (292 aa)). The ABC transporter 2 domain occupies 1041-1274 (IVFDNVNFTY…PESLFYKMVQ (234 aa)). An ATP-binding site is contributed by 1075 to 1082 (GRTGAGKS). The PDZ-binding signature appears at 1322–1325 (ETAL).

As to quaternary structure, interacts (via PDZ-binding motif) with SNX27 (via PDZ domain); this interaction accelerates MRP4 internalization. It depends on Mg(2+) as a cofactor. N-glycosylated; leading to substrate-selective effects on its transport activity.

The protein localises to the basolateral cell membrane. It localises to the apical cell membrane. The enzyme catalyses ATP + H2O + xenobioticSide 1 = ADP + phosphate + xenobioticSide 2.. It carries out the reaction an S-substituted glutathione(in) + ATP + H2O = an S-substituted glutathione(out) + ADP + phosphate + H(+). The catalysed reaction is 17beta-estradiol 17-O-(beta-D-glucuronate)(in) + ATP + H2O = 17beta-estradiol 17-O-(beta-D-glucuronate)(out) + ADP + phosphate + H(+). It catalyses the reaction dehydroepiandrosterone 3-sulfate(in) + ATP + H2O = dehydroepiandrosterone 3-sulfate(out) + ADP + phosphate + H(+). The enzyme catalyses leukotriene C4(in) + ATP + H2O = leukotriene C4(out) + ADP + phosphate + H(+). It carries out the reaction leukotriene B4(in) + ATP + H2O = leukotriene B4(out) + ADP + phosphate + H(+). The catalysed reaction is urate(in) + ATP + H2O = urate(out) + ADP + phosphate + H(+). It catalyses the reaction 3',5'-cyclic GMP(in) + ATP + H2O = 3',5'-cyclic GMP(out) + ADP + phosphate + H(+). The enzyme catalyses 3',5'-cyclic AMP(in) + ATP + H2O = 3',5'-cyclic AMP(out) + ADP + phosphate + H(+). It carries out the reaction prostaglandin E2(in) + ATP + H2O = prostaglandin E2(out) + ADP + phosphate + H(+). The catalysed reaction is prostaglandin E1(in) + ATP + H2O = prostaglandin E1(out) + ADP + phosphate + H(+). It catalyses the reaction glycodeoxycholate(in) + glutathione(in) + ATP + H2O = glycodeoxycholate(out) + glutathione(out) + ADP + phosphate + H(+). The enzyme catalyses cholate(in) + glutathione(in) + ATP + H2O = cholate(out) + glutathione(out) + ADP + phosphate + H(+). It carries out the reaction glycocholate(in) + glutathione(in) + ATP + H2O = glycocholate(out) + glutathione(out) + ADP + phosphate + H(+). The catalysed reaction is taurocholate(in) + glutathione(in) + ATP + H2O = taurocholate(out) + glutathione(out) + ADP + phosphate + H(+). It catalyses the reaction glycochenodeoxycholate(in) + glutathione(in) + ATP + H2O = glycochenodeoxycholate(out) + glutathione(out) + ADP + phosphate + H(+). The enzyme catalyses taurochenodeoxycholate(in) + glutathione(in) + ATP + H2O = taurochenodeoxycholate(out) + glutathione(out) + ADP + phosphate + H(+). It carries out the reaction glycoursodeoxycholate(in) + glutathione(in) + ATP + H2O = glycoursodeoxycholate(out) + glutathione(out) + ADP + phosphate + H(+). The catalysed reaction is tauroursodeoxycholate(in) + glutathione(in) + ATP + H2O = tauroursodeoxycholate(out) + glutathione(out) + ADP + phosphate + H(+). In terms of biological role, ATP-dependent transporter of the ATP-binding cassette (ABC) family that actively extrudes physiological compounds and xenobiotics from cells. Transports a range of endogenous molecules that have a key role in cellular communication and signaling, including cyclic nucleotides such as cyclic AMP (cAMP) and cyclic GMP (cGMP), bile acids, steroid conjugates, urate, and prostaglandins. Also mediates the ATP-dependent efflux of glutathione conjugates such as leukotriene C4 (LTC4) and leukotriene B4 (LTB4). The presence of GSH is necessary for the ATP-dependent transport of LTB4, whereas GSH is not required for the transport of LTC4. Mediates the cotransport of bile acids with reduced glutathione (GSH). Transports a wide range of drugs and their metabolites, including anticancer, antiviral and antibiotics molecules. Confers resistance to anticancer agents. The chain is ATP-binding cassette sub-family C member 4 from Mus musculus (Mouse).